The chain runs to 276 residues: ADP-dependent (S)-NAD(P)H-hydrate dehydratase (276 aa).

Positions 7 to 274 (METLNSINIP…NEIPYAMKQL (268 aa)) constitute a YjeF C-terminal domain. Residues Ala-42, Gly-105, and His-154 each contribute to the (6S)-NADPHX site. Gly-216 is a binding site for AMP. Asp-217 serves as a coordination point for (6S)-NADPHX.

It belongs to the NnrD/CARKD family. Homotetramer. Mg(2+) is required as a cofactor.

The catalysed reaction is (6S)-NADHX + ADP = AMP + phosphate + NADH + H(+). The enzyme catalyses (6S)-NADPHX + ADP = AMP + phosphate + NADPH + H(+). Catalyzes the dehydration of the S-form of NAD(P)HX at the expense of ADP, which is converted to AMP. Together with NAD(P)HX epimerase, which catalyzes the epimerization of the S- and R-forms, the enzyme allows the repair of both epimers of NAD(P)HX, a damaged form of NAD(P)H that is a result of enzymatic or heat-dependent hydration. This Staphylococcus aureus (strain NCTC 8325 / PS 47) protein is ADP-dependent (S)-NAD(P)H-hydrate dehydratase.